The chain runs to 37 residues: Large ribosomal subunit protein bL36c (37 aa).

Component of the chloroplast large ribosomal subunit (LSU). Mature 70S chloroplast ribosomes of higher plants consist of a small (30S) and a large (50S) subunit. The 30S small subunit contains 1 molecule of ribosomal RNA (16S rRNA) and 24 different proteins. The 50S large subunit contains 3 rRNA molecules (23S, 5S and 4.5S rRNA) and 33 different proteins.

It is found in the plastid. It localises to the chloroplast. Functionally, component of the chloroplast ribosome (chloro-ribosome), a dedicated translation machinery responsible for the synthesis of chloroplast genome-encoded proteins, including proteins of the transcription and translation machinery and components of the photosynthetic apparatus. This is Large ribosomal subunit protein bL36c (rpl36) from Spinacia oleracea (Spinach).